Here is a 301-residue protein sequence, read N- to C-terminus: Tyrosine recombinase XerC (301 aa).

The 83-residue stretch at 2–84 (TNTQFYITNF…TLRSFFSYLY (83 aa)) folds into the Core-binding (CB) domain. In terms of domain architecture, Tyr recombinase spans 105-291 (ALPKFLTVDD…DLKHLIEVYD (187 aa)). Catalysis depends on residues arginine 145, lysine 169, histidine 243, arginine 246, and histidine 269. The active-site O-(3'-phospho-DNA)-tyrosine intermediate is tyrosine 278.

Belongs to the 'phage' integrase family. XerC subfamily. As to quaternary structure, forms a cyclic heterotetrameric complex composed of two molecules of XerC and two molecules of XerD.

It is found in the cytoplasm. Functionally, site-specific tyrosine recombinase, which acts by catalyzing the cutting and rejoining of the recombining DNA molecules. The XerC-XerD complex is essential to convert dimers of the bacterial chromosome into monomers to permit their segregation at cell division. It also contributes to the segregational stability of plasmids. This is Tyrosine recombinase XerC from Thermodesulfovibrio yellowstonii (strain ATCC 51303 / DSM 11347 / YP87).